The primary structure comprises 179 residues: uncharacterized protein (179 aa).

The N-terminal stretch at 1-26 (MKKNMILFFGILKKLLICILKMEIKC) is a signal peptide.

This is an uncharacterized protein from Acheta domesticus (House cricket).